Consider the following 476-residue polypeptide: MRFKPVIGLEIHVQLNTKTKAFCSCPADVFELEPNNAICPVCTGQPGALPVPSKQMYEFGILLAAALNCKIHEFTRFDRKNYFYPDLPKGYQITQYFYPLATNGYLKLNGKKIRINRIHLEEDAGKLLHSSETITQAESTLVDMNRCGVPLAEIVTEPDIESPEEARKFLEKLRQILRYLGVSTGDMEKGALRCDANISVIDLENNVQSNKVEVKNMNSFKFVEKALEYEFNRIKKHLKKGENVVKETRGWDLASKKTISMRSKEEANDYRYFPEPDIPPVVIPKEEINKIIEKIPELPDEKINRFKIQYGLTDYEAGILTTSINLANYFEECVKETKNPKETSNWFLTELLKYISPEEVFENLKIKPKHFKELFDLISSGKITRNIAKEIFKEIFETGKNPEEIVKEKGIEVIGDESLIEDMLKKIMAENEDKVNAYKNGKKGLLGFFVGQIMKQTKGKADAKKANEIAKRLLGD.

Belongs to the GatB/GatE family. GatB subfamily. Heterotrimer of A, B and C subunits.

It carries out the reaction L-glutamyl-tRNA(Gln) + L-glutamine + ATP + H2O = L-glutaminyl-tRNA(Gln) + L-glutamate + ADP + phosphate + H(+). The catalysed reaction is L-aspartyl-tRNA(Asn) + L-glutamine + ATP + H2O = L-asparaginyl-tRNA(Asn) + L-glutamate + ADP + phosphate + 2 H(+). Functionally, allows the formation of correctly charged Asn-tRNA(Asn) or Gln-tRNA(Gln) through the transamidation of misacylated Asp-tRNA(Asn) or Glu-tRNA(Gln) in organisms which lack either or both of asparaginyl-tRNA or glutaminyl-tRNA synthetases. The reaction takes place in the presence of glutamine and ATP through an activated phospho-Asp-tRNA(Asn) or phospho-Glu-tRNA(Gln). This chain is Aspartyl/glutamyl-tRNA(Asn/Gln) amidotransferase subunit B, found in Thermosipho melanesiensis (strain DSM 12029 / CIP 104789 / BI429).